Here is an 84-residue protein sequence, read N- to C-terminus: Sulfur carrier protein TusA (84 aa).

The active-site Cysteine persulfide intermediate is the Cys21.

Belongs to the sulfur carrier protein TusA family.

Its subcellular location is the cytoplasm. In terms of biological role, sulfur carrier protein which probably makes part of a sulfur-relay system. This chain is Sulfur carrier protein TusA, found in Pseudomonas syringae pv. syringae (strain B728a).